The primary structure comprises 276 residues: Large ribosomal subunit protein uL2 (276 aa).

Disordered regions lie at residues 34-55 (LQPL…RHQG) and 221-276 (RGSV…RRTK). Residues 37-48 (LKNNAGRNNNGR) show a composition bias toward polar residues.

The protein belongs to the universal ribosomal protein uL2 family. Part of the 50S ribosomal subunit. Forms a bridge to the 30S subunit in the 70S ribosome.

Functionally, one of the primary rRNA binding proteins. Required for association of the 30S and 50S subunits to form the 70S ribosome, for tRNA binding and peptide bond formation. It has been suggested to have peptidyltransferase activity; this is somewhat controversial. Makes several contacts with the 16S rRNA in the 70S ribosome. The chain is Large ribosomal subunit protein uL2 from Enterococcus faecalis (strain ATCC 700802 / V583).